The sequence spans 338 residues: Heat-inducible transcription repressor HrcA (338 aa).

The protein belongs to the HrcA family.

Its function is as follows. Negative regulator of class I heat shock genes (grpE-dnaK-dnaJ and groELS operons). Prevents heat-shock induction of these operons. The chain is Heat-inducible transcription repressor HrcA from Bacillus cereus (strain ATCC 10987 / NRS 248).